A 207-amino-acid polypeptide reads, in one-letter code: Small ribosomal subunit protein uS4 (207 aa).

The tract at residues 31 to 54 is disordered; sequence KSKFETKPGQHGRTSGSRTSDFGL. Polar residues predominate over residues 42 to 52; sequence GRTSGSRTSDF. The region spanning 97–158 is the S4 RNA-binding domain; sequence SRLDNVVYRM…KAKKQLRVTE (62 aa).

This sequence belongs to the universal ribosomal protein uS4 family. Part of the 30S ribosomal subunit. Contacts protein S5. The interaction surface between S4 and S5 is involved in control of translational fidelity.

Functionally, one of the primary rRNA binding proteins, it binds directly to 16S rRNA where it nucleates assembly of the body of the 30S subunit. With S5 and S12 plays an important role in translational accuracy. This chain is Small ribosomal subunit protein uS4, found in Methylibium petroleiphilum (strain ATCC BAA-1232 / LMG 22953 / PM1).